A 727-amino-acid chain; its full sequence is NHL repeat-containing protein 2 (727 aa).

The Thioredoxin domain maps to 43–198 (RERDLTVPEL…TLKFYKERGQ (156 aa)). NHL repeat units lie at residues 207–249 (KLYK…TLKN), 260–302 (NSGR…IDLE), 330–364 (ISSP…VWAL), 404–434 (FAQP…VRMI), 456–500 (AFGD…VDPK), and 513–557 (ASNV…LDLE).

Monomer.

It localises to the cytoplasm. The protein localises to the cytosol. Its function is as follows. Required for normal embryonic development. This is NHL repeat-containing protein 2 (NHLRC2) from Gallus gallus (Chicken).